We begin with the raw amino-acid sequence, 861 residues long: Bifunctional uridylyltransferase/uridylyl-removing enzyme (861 aa).

Residues 1 to 321 (MKNDNRIIKN…VYHQKQKIIR (321 aa)) are uridylyltransferase. Positions 322-678 (LDDEFQLSNR…IMPHHSQGGT (357 aa)) are uridylyl-removing. One can recognise an HD domain in the interval 440 to 562 (VDQHTLFVIR…LPHAKYLDYL (123 aa)). 2 consecutive ACT domains span residues 679 to 760 (EVFI…AVSR) and 788 to 861 (QLFL…KSKY).

It belongs to the GlnD family. Mg(2+) serves as cofactor.

The catalysed reaction is [protein-PII]-L-tyrosine + UTP = [protein-PII]-uridylyl-L-tyrosine + diphosphate. It catalyses the reaction [protein-PII]-uridylyl-L-tyrosine + H2O = [protein-PII]-L-tyrosine + UMP + H(+). Uridylyltransferase (UTase) activity is inhibited by glutamine, while glutamine activates uridylyl-removing (UR) activity. Functionally, modifies, by uridylylation and deuridylylation, the PII regulatory proteins (GlnB and homologs), in response to the nitrogen status of the cell that GlnD senses through the glutamine level. Under low glutamine levels, catalyzes the conversion of the PII proteins and UTP to PII-UMP and PPi, while under higher glutamine levels, GlnD hydrolyzes PII-UMP to PII and UMP (deuridylylation). Thus, controls uridylylation state and activity of the PII proteins, and plays an important role in the regulation of nitrogen assimilation and metabolism. The polypeptide is Bifunctional uridylyltransferase/uridylyl-removing enzyme (Legionella pneumophila (strain Lens)).